Consider the following 274-residue polypeptide: 2,3,4,5-tetrahydropyridine-2,6-dicarboxylate N-succinyltransferase (274 aa).

Arginine 104 and aspartate 141 together coordinate substrate.

It belongs to the transferase hexapeptide repeat family. Homotrimer.

It is found in the cytoplasm. The enzyme catalyses (S)-2,3,4,5-tetrahydrodipicolinate + succinyl-CoA + H2O = (S)-2-succinylamino-6-oxoheptanedioate + CoA. The protein operates within amino-acid biosynthesis; L-lysine biosynthesis via DAP pathway; LL-2,6-diaminopimelate from (S)-tetrahydrodipicolinate (succinylase route): step 1/3. This chain is 2,3,4,5-tetrahydropyridine-2,6-dicarboxylate N-succinyltransferase, found in Buchnera aphidicola subsp. Baizongia pistaciae (strain Bp).